Reading from the N-terminus, the 311-residue chain is Transcription factor BIM2 (311 aa).

Disordered regions lie at residues 1-60 and 271-311; these read MRTG…RRSK and ANQG…MKTL. Composition is skewed to basic and acidic residues over residues 33–44 and 51–60; these read SNRDSKENDKAS and SVTEQRRRSK. The bHLH domain maps to 45–95; that stretch reads AIRSKHSVTEQRRRSKINERFQILRELIPNSEQKRDTASFLLEVIDYVQYL.

As to quaternary structure, homodimer. Interacts with the N-terminus of BZR2/BES1. Expressed constitutively in roots, leaves, stems, and flowers.

Its subcellular location is the nucleus. Positive brassinosteroid-signaling protein. The chain is Transcription factor BIM2 (BIM2) from Arabidopsis thaliana (Mouse-ear cress).